The chain runs to 407 residues: MLRWITAGESHGRALVALVDGMVAGVEVTSTEIADQLARRRLGYGRGARMAFERDAVTVLSGIRHGSTLGGPIAIEIGNTEWPKWEAVMAADPLDPAAAAELENSARNAPLTRPRPGHADYAGMLKYGFDDARPVLERASARETAARVAAGTVARAFLRQALGVEVLSHVVSIGASAPYDGPPPQPEDLLAIDASPVRAFDGQAEKSMIAEIEAAKKDGDTLGGVVEVVALGLPVGLGSFTSGENRLDSQLAAAVMGIQAIKGVEIGDGFETARRRGSRAHDEMYPGTDGVVRSTNRAGGLEGGMTNGQPLRVRAAMKPISTVPKALATVDLATGDEAVAIHQRSDVCAVPAAAVVVETMVALVLARVTLEKFGGDSLAETRRNIEAYQRSVADREAPAARARAIRG.

Positions 40 and 46 each coordinate NADP(+). Residues 138-140 (RAS) and 259-260 (QA) contribute to the FMN site. Basic and acidic residues predominate over residues 275 to 284 (RRGSRAHDEM). The interval 275-308 (RRGSRAHDEMYPGTDGVVRSTNRAGGLEGGMTNG) is disordered. Residues glycine 303, 318–322 (KPIST), and arginine 344 each bind FMN.

The protein belongs to the chorismate synthase family. As to quaternary structure, homotetramer. Requires FMNH2 as cofactor.

The enzyme catalyses 5-O-(1-carboxyvinyl)-3-phosphoshikimate = chorismate + phosphate. Its pathway is metabolic intermediate biosynthesis; chorismate biosynthesis; chorismate from D-erythrose 4-phosphate and phosphoenolpyruvate: step 7/7. In terms of biological role, catalyzes the anti-1,4-elimination of the C-3 phosphate and the C-6 proR hydrogen from 5-enolpyruvylshikimate-3-phosphate (EPSP) to yield chorismate, which is the branch point compound that serves as the starting substrate for the three terminal pathways of aromatic amino acid biosynthesis. This reaction introduces a second double bond into the aromatic ring system. This Mycobacterium ulcerans (strain Agy99) protein is Chorismate synthase.